Consider the following 95-residue polypeptide: Co-chaperonin GroES (95 aa).

Belongs to the GroES chaperonin family. As to quaternary structure, heptamer of 7 subunits arranged in a ring. Interacts with the chaperonin GroEL.

It is found in the cytoplasm. Its function is as follows. Together with the chaperonin GroEL, plays an essential role in assisting protein folding. The GroEL-GroES system forms a nano-cage that allows encapsulation of the non-native substrate proteins and provides a physical environment optimized to promote and accelerate protein folding. GroES binds to the apical surface of the GroEL ring, thereby capping the opening of the GroEL channel. This Staphylococcus saprophyticus subsp. saprophyticus (strain ATCC 15305 / DSM 20229 / NCIMB 8711 / NCTC 7292 / S-41) protein is Co-chaperonin GroES.